A 118-amino-acid chain; its full sequence is UPF0148 protein LS215_1455 (118 aa).

It belongs to the UPF0148 family.

This chain is UPF0148 protein LS215_1455, found in Saccharolobus islandicus (strain L.S.2.15 / Lassen #1) (Sulfolobus islandicus).